We begin with the raw amino-acid sequence, 490 residues long: MTSKSSPLIFERSREGRYAYSLPISDIKTNSVESLLDDKFIRKNKAEFPEVAELDLVRHYTELSNKNFGVDNGFYPLGSCTMKYNPKINEKVARIPGFSESHPLQDEDQVQGSLEIIYSLQEELKEITGMDEVTLQPAAGAHGEWTALMIFKAYHENNGEGHRDEVIVPDSAHGTNPASASFAGFKSVTVKSNERGEVDIDDLKRVVNENTAAIMLTNPNTLGIFEKNIMEIREIVHNAGGLLYYDGANLNAIMDKVRPGDMGFDAVHLNLHKTFTGPHGGGGPGSGPVGVVKELASYLPKPMVIKDGDKFKYDNDIKNSIGRVKPFYGNFGIYLRAYTYIRTMGATGLKEVSEAAVLNANYIKARLSEHFEIPYKQYCKHEFVLSGVRQKEFGVRTLDMAKRLLDFGVHPPTIYFPLNVEEGMMIEPTETESKETLDYFIDTLISIAEEAKNDPDKVLEAPYTTVIDRLDEATAARKPILKFENLKQEK.

Lys-273 carries the post-translational modification N6-(pyridoxal phosphate)lysine.

It belongs to the GcvP family. C-terminal subunit subfamily. As to quaternary structure, the glycine cleavage system is composed of four proteins: P, T, L and H. In this organism, the P 'protein' is a heterodimer of two subunits. It depends on pyridoxal 5'-phosphate as a cofactor.

The catalysed reaction is N(6)-[(R)-lipoyl]-L-lysyl-[glycine-cleavage complex H protein] + glycine + H(+) = N(6)-[(R)-S(8)-aminomethyldihydrolipoyl]-L-lysyl-[glycine-cleavage complex H protein] + CO2. Functionally, the glycine cleavage system catalyzes the degradation of glycine. The P protein binds the alpha-amino group of glycine through its pyridoxal phosphate cofactor; CO(2) is released and the remaining methylamine moiety is then transferred to the lipoamide cofactor of the H protein. The sequence is that of Probable glycine dehydrogenase (decarboxylating) subunit 2 from Staphylococcus aureus (strain MRSA252).